A 147-amino-acid chain; its full sequence is Small ribosomal subunit protein uS12 (147 aa).

Belongs to the universal ribosomal protein uS12 family. Part of the 30S ribosomal subunit.

Its function is as follows. With S4 and S5 plays an important role in translational accuracy. Located at the interface of the 30S and 50S subunits. This Thermococcus celer protein is Small ribosomal subunit protein uS12.